The primary structure comprises 713 residues: Cadherin-13 (713 aa).

The signal sequence occupies residues 1 to 22 (MQPATPLVLCVLLSQVLLLTSA). A propeptide spanning residues 23–138 (EDLDCTPGFQ…RTSPVPRQKR (116 aa)) is cleaved from the precursor. Residues asparagine 52 and asparagine 86 are each glycosylated (N-linked (GlcNAc...) asparagine). Cadherin domains follow at residues 139 to 245 (SIVV…RPIF), 246 to 363 (REGP…SPKF), 364 to 477 (TKKE…SPVF), 478 to 585 (YPDP…APFI), and 584 to 694 (FIYP…AAGA). A disordered region spans residues 156–178 (PRDVGKVVDSDRPEGSKFRLTGK). Over residues 158-172 (DVGKVVDSDRPEGSK) the composition is skewed to basic and acidic residues. 7 N-linked (GlcNAc...) asparagine glycosylation sites follow: asparagine 382, asparagine 489, asparagine 500, asparagine 530, asparagine 598, asparagine 638, and asparagine 671. Glycine 693 is lipidated: GPI-anchor amidated glycine. Residues 694–713 (APHFSAATALLLSLFSLARL) constitute a propeptide, removed in mature form.

In terms of assembly, by contrast to classical cadherins, homodimerization in trans is not mediated by cadherin EC1 domain strand-swapping, but instead through a homophilic adhesive interface which joins two elongated EC1-EC2 domains through a region near their Ca2+-binding sites to form a tetrahedral, X-like shape.

It localises to the cell membrane. It is found in the cytoplasm. Cadherins are calcium-dependent cell adhesion proteins. They preferentially interact with themselves in a homophilic manner in connecting cells; cadherins may thus contribute to the sorting of heterogeneous cell types. May act as a negative regulator of neural cell growth. This Bos taurus (Bovine) protein is Cadherin-13 (CDH13).